A 370-amino-acid polypeptide reads, in one-letter code: Protein TEEBE (370 aa).

A signal peptide spans 1–21; the sequence is MSLYHSLSIFLLLSLCHGSYS. A glycan (N-linked (GlcNAc...) asparagine) is linked at asparagine 215.

In terms of tissue distribution, expressed in primary and lateral roots, stigmatic papillae and hypocotyls.

Its subcellular location is the secreted. The protein localises to the cell wall. Functionally, prevents hypocotyl epidermal cells elongation by modulating the pectin status in cell walls. Likely regulates pectin methylesterification degree during cell separation and elongation, including upon root-knot nematode Meloidogyne incognita infection. The protein is Protein TEEBE of Arabidopsis thaliana (Mouse-ear cress).